The sequence spans 309 residues: Aspartate carbamoyltransferase catalytic subunit (309 aa).

Arg-55 and Thr-56 together coordinate carbamoyl phosphate. An L-aspartate-binding site is contributed by Lys-85. Residues Arg-106, His-135, and Gln-138 each coordinate carbamoyl phosphate. Positions 168 and 230 each coordinate L-aspartate. 2 residues coordinate carbamoyl phosphate: Leu-268 and Pro-269.

Belongs to the aspartate/ornithine carbamoyltransferase superfamily. ATCase family. In terms of assembly, heterododecamer (2C3:3R2) of six catalytic PyrB chains organized as two trimers (C3), and six regulatory PyrI chains organized as three dimers (R2).

It carries out the reaction carbamoyl phosphate + L-aspartate = N-carbamoyl-L-aspartate + phosphate + H(+). Its pathway is pyrimidine metabolism; UMP biosynthesis via de novo pathway; (S)-dihydroorotate from bicarbonate: step 2/3. Functionally, catalyzes the condensation of carbamoyl phosphate and aspartate to form carbamoyl aspartate and inorganic phosphate, the committed step in the de novo pyrimidine nucleotide biosynthesis pathway. This chain is Aspartate carbamoyltransferase catalytic subunit, found in Photobacterium profundum (strain SS9).